The chain runs to 340 residues: Mitochondrial distribution and morphology protein 12 (340 aa).

The SMP-LTD domain occupies Met1–Glu321. Disordered stretches follow at residues His79–Ile107, Ser161–Glu184, and Ser319–His340. A compositionally biased stretch (polar residues) spans Gln89–Pro106. The segment covering Glu321–His340 has biased composition (acidic residues).

The protein belongs to the MDM12 family. Component of the ER-mitochondria encounter structure (ERMES) or MDM complex, composed of MMM1, MDM10, MDM12 and MDM34. An MMM1 homodimer associates with one molecule of MDM12 on each side in a pairwise head-to-tail manner, and the SMP-LTD domains of MMM1 and MDM12 generate a continuous hydrophobic tunnel for phospholipid trafficking.

It is found in the mitochondrion outer membrane. The protein resides in the endoplasmic reticulum membrane. In terms of biological role, component of the ERMES/MDM complex, which serves as a molecular tether to connect the endoplasmic reticulum (ER) and mitochondria. Components of this complex are involved in the control of mitochondrial shape and protein biogenesis, and function in nonvesicular lipid trafficking between the ER and mitochondria. MDM12 is required for the interaction of the ER-resident membrane protein MMM1 and the outer mitochondrial membrane-resident beta-barrel protein MDM10. The MDM12-MMM1 subcomplex functions in the major beta-barrel assembly pathway that is responsible for biogenesis of all mitochondrial outer membrane beta-barrel proteins, and acts in a late step after the SAM complex. The MDM10-MDM12-MMM1 subcomplex further acts in the TOM40-specific pathway after the action of the MDM12-MMM1 complex. Essential for establishing and maintaining the structure of mitochondria and maintenance of mtDNA nucleoids. The sequence is that of Mitochondrial distribution and morphology protein 12 from Yarrowia lipolytica (strain CLIB 122 / E 150) (Yeast).